A 137-amino-acid chain; its full sequence is Peptide methionine sulfoxide reductase MsrB (137 aa).

Residues 7–129 (AEELKKNLSE…NSASLRFTDG (123 aa)) form the MsrB domain. Zn(2+) is bound by residues Cys46, Cys49, Cys95, and Cys98. Cys118 (nucleophile) is an active-site residue.

The protein belongs to the MsrB Met sulfoxide reductase family. It depends on Zn(2+) as a cofactor.

The enzyme catalyses L-methionyl-[protein] + [thioredoxin]-disulfide + H2O = L-methionyl-(R)-S-oxide-[protein] + [thioredoxin]-dithiol. The polypeptide is Peptide methionine sulfoxide reductase MsrB (Escherichia coli O45:K1 (strain S88 / ExPEC)).